The chain runs to 528 residues: Calcium-dependent protein kinase 13 (528 aa).

Gly-2 is lipidated: N-myristoyl glycine. Basic and acidic residues predominate over residues 17–32; sequence KSNYSGHDHARKDAAG. The segment at 17 to 37 is disordered; that stretch reads KSNYSGHDHARKDAAGGKKSA. Ser-43 bears the Phosphoserine mark. In terms of domain architecture, Protein kinase spans 54 to 312; sequence YLLDRELGRG…AKQVLEHPWI (259 aa). ATP-binding positions include 60-68 and Lys-83; that span reads LGRGEFGVT. Asp-178 acts as the Proton acceptor in catalysis. The residue at position 218 (Ser-218) is a Phosphoserine. The autoinhibitory domain stretch occupies residues 318 to 348; that stretch reads APNVPLGDVVKSRLKQFSVMNRFKRKALRVI. EF-hand domains lie at 355–390, 391–426, 427–462, and 463–498; these read EEVE…FSTQ, LAES…LQKV, ANDE…DGGD, and DCVD…GTDW. Ca(2+) contacts are provided by Asp-368, Asp-370, Asp-372, Glu-379, Asp-404, Thr-410, Glu-415, Asp-440, Asp-442, Asn-444, Tyr-446, Glu-451, Asp-476, Asp-478, Asp-480, and Arg-482. Ser-484 is modified (phosphoserine). Glu-487 serves as a coordination point for Ca(2+). Phosphoserine is present on Ser-522.

Belongs to the protein kinase superfamily. Ser/Thr protein kinase family. CDPK subfamily.

The protein localises to the cell membrane. It catalyses the reaction L-seryl-[protein] + ATP = O-phospho-L-seryl-[protein] + ADP + H(+). The enzyme catalyses L-threonyl-[protein] + ATP = O-phospho-L-threonyl-[protein] + ADP + H(+). Activated by calcium. Autophosphorylation may play an important role in the regulation of the kinase activity. Its function is as follows. May play a role in signal transduction pathways that involve calcium as a second messenger. The polypeptide is Calcium-dependent protein kinase 13 (CPK13) (Arabidopsis thaliana (Mouse-ear cress)).